The sequence spans 573 residues: Chromosomal replication initiator protein DnaA (573 aa).

Residues 1-85 (MSQNSSSLLE…TKVLSMRMGR (85 aa)) form a domain I, interacts with DnaA modulators region. Residues 85-231 (RSFSLAVSVE…TPAHNPNREV (147 aa)) are domain II. A disordered region spans residues 91 to 232 (VSVEPSRDGE…PAHNPNREVS (142 aa)). Residues 116–169 (PYPGQGPQSPQGQQGQQGQHPVQQEVRAHAPAPHQQGQHQAAQHQPPANQAPGQ) show a composition bias toward low complexity. Polar residues predominate over residues 178–191 (QASQSAGAWEQTHS). Over residues 202–213 (SPAPVEPPPQPA) the composition is skewed to pro residues. The domain III, AAA+ region stretch occupies residues 232 to 448 (SLNPKYTFEN…GALIRVSAYS (217 aa)). ATP contacts are provided by Gly-276, Gly-278, Lys-279, and Thr-280. Positions 449-573 (SLINQPIDKE…TQLIKSRGRN (125 aa)) are domain IV, binds dsDNA.

Belongs to the DnaA family. In terms of assembly, oligomerizes as a right-handed, spiral filament on DNA at oriC.

It localises to the cytoplasm. In terms of biological role, plays an essential role in the initiation and regulation of chromosomal replication. ATP-DnaA binds to the origin of replication (oriC) to initiate formation of the DNA replication initiation complex once per cell cycle. Binds the DnaA box (a 9 base pair repeat at the origin) and separates the double-stranded (ds)DNA. Forms a right-handed helical filament on oriC DNA; dsDNA binds to the exterior of the filament while single-stranded (ss)DNA is stabiized in the filament's interior. The ATP-DnaA-oriC complex binds and stabilizes one strand of the AT-rich DNA unwinding element (DUE), permitting loading of DNA polymerase. After initiation quickly degrades to an ADP-DnaA complex that is not apt for DNA replication. Binds acidic phospholipids. In Corynebacterium efficiens (strain DSM 44549 / YS-314 / AJ 12310 / JCM 11189 / NBRC 100395), this protein is Chromosomal replication initiator protein DnaA.